The primary structure comprises 85 residues: Conotoxin Lt28.3 (85 aa).

The first 21 residues, 1–21, serve as a signal peptide directing secretion; it reads MPKLEMMLLVLLILPLCYIDA. The propeptide occupies 22 to 40; sequence VGPLPPWNMEDEIIEHWQK.

It belongs to the conotoxin D superfamily. In terms of processing, contains 5 disulfide bonds. As to expression, expressed by the venom duct.

It is found in the secreted. Probable neurotoxin. In Conus litteratus (Lettered cone), this protein is Conotoxin Lt28.3.